A 64-amino-acid chain; its full sequence is Antimicrobial peptide THP2 (64 aa).

A signal peptide spans 1–28 (MRILYLLFSLLFLALQVSPGLSSPKRDM). Disulfide bonds link cysteine 31–cysteine 57, cysteine 36–cysteine 51, and cysteine 41–cysteine 58.

Expressed in circulating heterophil granulocytes and bone marrow (at protein level).

Its subcellular location is the secreted. Functionally, antibacterial activity against the Gram-positive bacterium Staphylococcus aureus. Lacks antibacterial activity against the Gram-negative bacterium E.coli K-12. The chain is Antimicrobial peptide THP2 from Meleagris gallopavo (Wild turkey).